Here is a 144-residue protein sequence, read N- to C-terminus: Putative protein PHLOEM PROTEIN 2-LIKE B4 (144 aa).

The protein is Putative protein PHLOEM PROTEIN 2-LIKE B4 (PP2B4) of Arabidopsis thaliana (Mouse-ear cress).